Consider the following 348-residue polypeptide: Phospho-2-dehydro-3-deoxyheptonate aldolase, Trp-sensitive (348 aa).

It belongs to the class-I DAHP synthase family.

The catalysed reaction is D-erythrose 4-phosphate + phosphoenolpyruvate + H2O = 7-phospho-2-dehydro-3-deoxy-D-arabino-heptonate + phosphate. The protein operates within metabolic intermediate biosynthesis; chorismate biosynthesis; chorismate from D-erythrose 4-phosphate and phosphoenolpyruvate: step 1/7. Functionally, stereospecific condensation of phosphoenolpyruvate (PEP) and D-erythrose-4-phosphate (E4P) giving rise to 3-deoxy-D-arabino-heptulosonate-7-phosphate (DAHP). The sequence is that of Phospho-2-dehydro-3-deoxyheptonate aldolase, Trp-sensitive (aroH) from Buchnera aphidicola subsp. Schizaphis graminum (strain Sg).